We begin with the raw amino-acid sequence, 473 residues long: Cephalotoxin-like protein (473 aa).

An N-terminal signal peptide occupies residues 1 to 21 (RWLGWQKFCWISCLFSSISSG). Coiled-coil stretches lie at residues 40–60 (AINA…EALK) and 116–147 (LINE…ADTA).

In terms of tissue distribution, component of the acid-insoluble and acid-soluble organic matrix of the aragonitic skeleton (at protein level).

Its subcellular location is the secreted. The protein is Cephalotoxin-like protein of Acropora millepora (Staghorn coral).